A 313-amino-acid chain; its full sequence is Small ribosomal subunit protein uS2 (313 aa).

An N-acetylserine modification is found at Ser-2. Laminin-binding regions lie at residues 161-180 and 205-229; these read IPCN…MLAR and RDPE…EFQG. 2 [DE]-W-[ST] repeats span residues 230-232 and 245-247; these read EWS and DWS. Residues 242-313 form a laminin-binding region; the sequence is EVADWSEGVA…DWGGTTSDWS (72 aa). Over residues 262–274 the composition is skewed to low complexity; the sequence is PATAAAAAAAAPP. The segment at 262-313 is disordered; it reads PATAAAAAAAAPPVKTGEVFSEDWSTQPATDDWSTAPTAQASDWGGTTSDWS. 3 [DE]-W-[ST] repeats span residues 284–286, 293–295, and 311–313; these read DWS. Over residues 284–313 the composition is skewed to polar residues; it reads DWSTQPATDDWSTAPTAQASDWGGTTSDWS.

It belongs to the universal ribosomal protein uS2 family. Monomer (37LRP) and homodimer (67LR). Component of the small ribosomal subunit. Mature ribosomes consist of a small (40S) and a large (60S) subunit. The 40S subunit contains about 33 different proteins and 1 molecule of RNA (18S). The 60S subunit contains about 49 different proteins and 3 molecules of RNA (28S, 5.8S and 5S). Interacts with rps21. Interacts with several laminins including at least lamb1. Interacts with mdk. In terms of processing, acylated. Acylation may be a prerequisite for conversion of the monomeric 37 kDa laminin receptor precursor (37LRP) to the mature dimeric 67 kDa laminin receptor (67LR), and may provide a mechanism for membrane association. Cleaved by stromelysin-3 (ST3) at the cell surface. Cleavage by stromelysin-3 may be a mechanism to alter cell-extracellular matrix interactions.

It localises to the cell membrane. Its subcellular location is the cytoplasm. The protein resides in the nucleus. Its function is as follows. Required for the assembly and/or stability of the 40S ribosomal subunit. Required for the processing of the 20S rRNA-precursor to mature 18S rRNA in a late step of the maturation of 40S ribosomal subunits. Also functions as a cell surface receptor for laminin. Plays a role in cell adhesion to the basement membrane and in the consequent activation of signaling transduction pathways. May play a role in cell fate determination and tissue morphogenesis. The polypeptide is Small ribosomal subunit protein uS2 (rpsa) (Solea senegalensis (Senegalese sole)).